Here is a 125-residue protein sequence, read N- to C-terminus: Small ribosomal subunit protein uS13 (125 aa).

The interval 95–125 is disordered; that stretch reads GLPVNGQRTRTNARTRKGVKKTVANKKKATK. The segment covering 105-125 has biased composition (basic residues); the sequence is TNARTRKGVKKTVANKKKATK.

It belongs to the universal ribosomal protein uS13 family. In terms of assembly, part of the 30S ribosomal subunit. Forms a loose heterodimer with protein S19. Forms two bridges to the 50S subunit in the 70S ribosome.

Functionally, located at the top of the head of the 30S subunit, it contacts several helices of the 16S rRNA. In the 70S ribosome it contacts the 23S rRNA (bridge B1a) and protein L5 of the 50S subunit (bridge B1b), connecting the 2 subunits; these bridges are implicated in subunit movement. Contacts the tRNAs in the A and P-sites. This chain is Small ribosomal subunit protein uS13, found in Leptospira biflexa serovar Patoc (strain Patoc 1 / Ames).